The primary structure comprises 239 residues: tRNA (guanine-N(7)-)-methyltransferase (239 aa).

Residues Glu-69, Glu-94, Asp-121, and Asp-144 each coordinate S-adenosyl-L-methionine. Residue Asp-144 is part of the active site. Lys-148 contacts substrate. The tract at residues 150 to 155 (RHNKRR) is interaction with RNA. Residues Asp-180 and 217-220 (TKFE) contribute to the substrate site.

It belongs to the class I-like SAM-binding methyltransferase superfamily. TrmB family. In terms of assembly, monomer.

The catalysed reaction is guanosine(46) in tRNA + S-adenosyl-L-methionine = N(7)-methylguanosine(46) in tRNA + S-adenosyl-L-homocysteine. It functions in the pathway tRNA modification; N(7)-methylguanine-tRNA biosynthesis. Its function is as follows. Catalyzes the formation of N(7)-methylguanine at position 46 (m7G46) in tRNA. This chain is tRNA (guanine-N(7)-)-methyltransferase, found in Salmonella choleraesuis (strain SC-B67).